The following is a 224-amino-acid chain: UPF0758 protein PBPRA0202 (224 aa).

The MPN domain occupies 102 to 224; that stretch reads VLTSPQHTRH…IVSFSEQGWL (123 aa). Positions 173, 175, and 186 each coordinate Zn(2+). The JAMM motif motif lies at 173–186; sequence HNHPSGVAEPSQSD.

This sequence belongs to the UPF0758 family.

This is UPF0758 protein PBPRA0202 from Photobacterium profundum (strain SS9).